Reading from the N-terminus, the 522-residue chain is MSHTEPKAPVNTGEVENGHLYDGSGTEDDPFIVEFQKDDPGNPMNWGQSRKWFIAAIATLSVFAVTFTSSAYSVSANEVFKDFDISTEVFIVGLSLFVLGFAIGPAVWANIGLRSELYGRQILWIITHIAMVAFLGGSAGSQNVATLLILRFFAGTFGGSPLVNSGGTIADLFPPAQRGLALTIYCVAPFLGPILGPIVGGFVSESVGWRWVQGVCVIFIGVVGILGIVFIPETYGPVLLQRRTHQLAKADGKIYVSVLEKNQGKKLPSEVFKRALFRPWIFLFLEPIVLIASVYMAIIYGTVYMFMGAMPIVYNEDRGWSVGIGGLAFLGIAVGIIFGLVYAIWDNNVRYMKLFAAKSANPESRLPPAIVGGVALPIGMFAFAWTNYPSIHWSVSIILSAPFGFGCVLVILPIMNYLIDTYTIYAASVLAAAAIFRSVVGAVFPLFTTQMYHNLGIHWASSIPAFLTLLCMPFPLIMYRYGEAVRMKCKYSFEAAEMMRKMQLQQTAAATTTEKDKDSSSE.

The disordered stretch occupies residues 1 to 21 (MSHTEPKAPVNTGEVENGHLY). 12 consecutive transmembrane segments (helical) span residues 52–72 (WFIA…SSAY), 89–109 (VFIV…AVWA), 121–141 (QILW…SAGS), 143–163 (NVAT…SPLV), 183–203 (TIYC…GGFV), 211–231 (WVQG…IVFI), 280–300 (WIFL…AIIY), 324–344 (IGGL…VYAI), 366–386 (LPPA…FAWT), 395–415 (VSII…LPIM), 427–447 (ASVL…FPLF), and 457–477 (IHWA…FPLI).

It belongs to the major facilitator superfamily. Sugar transporter (TC 2.A.1.1) family.

Its subcellular location is the membrane. In terms of biological role, major facilitator-type transporter; part of the gene cluster that mediates the biosynthesis of sorbicillinoids, a diverse group of yellow secondary metabolites that restrict growth of competing pathogenic fungi but not of bacteria. The protein is Major facilitator-type transporter sorT of Penicillium rubens (strain ATCC 28089 / DSM 1075 / NRRL 1951 / Wisconsin 54-1255) (Penicillium chrysogenum).